We begin with the raw amino-acid sequence, 207 residues long: Large ribosomal subunit protein uL4 (207 aa).

The tract at residues 44–76 is disordered; sequence RRQGTQSTKTKSEVRGGGKKPWRQKGTGRARQG. Positions 60–71 are enriched in basic residues; sequence GGKKPWRQKGTG.

It belongs to the universal ribosomal protein uL4 family. In terms of assembly, part of the 50S ribosomal subunit.

Its function is as follows. One of the primary rRNA binding proteins, this protein initially binds near the 5'-end of the 23S rRNA. It is important during the early stages of 50S assembly. It makes multiple contacts with different domains of the 23S rRNA in the assembled 50S subunit and ribosome. Forms part of the polypeptide exit tunnel. The polypeptide is Large ribosomal subunit protein uL4 (Ruminiclostridium cellulolyticum (strain ATCC 35319 / DSM 5812 / JCM 6584 / H10) (Clostridium cellulolyticum)).